We begin with the raw amino-acid sequence, 909 residues long: WD repeat-containing protein 20 homolog (909 aa).

The interval serine 58 to arginine 132 is disordered. Composition is skewed to low complexity over residues glycine 80–asparagine 107 and serine 115–asparagine 127. WD repeat units lie at residues isoleucine 248–alanine 288, threonine 321–arginine 362, serine 363–arginine 402, and alanine 470–proline 517. 5 disordered regions span residues phenylalanine 458–aspartate 483, serine 554–valine 628, serine 661–serine 699, serine 720–arginine 739, and asparagine 749–serine 775. Polar residues-rich tracts occupy residues glycine 555–proline 569 and threonine 595–proline 606. Low complexity-rich tracts occupy residues glutamate 612 to valine 628 and glycine 673 to serine 699. Residues isoleucine 856–threonine 893 form a WD 5 repeat.

As to quaternary structure, component of the Usp12-46 deubiquitylase complex consisting of Usp12-46, Wdr20 and Uaf1; regulatory subunit that, together with Uaf1, stabilizes Usp12-46. The Usp12-46 deubiquitylase complex associates with arr/arrow; the interaction leads to deubiquitination and stabilization of arr/arrow.

In terms of biological role, regulatory component of the Usp12-46 deubiquitylase complex. This complex deubiquitylates the wg/wingless-signaling receptor arr/arrow, which stabilizes the receptor and increases its concentration at the cell surface; this enhances the sensitivity of cells to wg/wingless-signal stimulation. This increases the amplitude and spatial range of the signaling response to the wg/wingless morphogen gradient, facilitating the precise concentration-dependent regulation of its target genes. Required for wg/wingless-mediated signaling in the wing imaginal disc and for wg/wingless-dependent regulation of intestinal stem cell proliferation. The sequence is that of WD repeat-containing protein 20 homolog from Drosophila melanogaster (Fruit fly).